Consider the following 327-residue polypeptide: 2-keto-3-deoxygluconate permease (327 aa).

10 helical membrane-spanning segments follow: residues 10–30, 42–62, 73–93, 95–115, 139–159, 163–183, 199–219, 224–244, 254–274, and 289–309; these read IPGG…TFSP, GMIT…GASI, KSGT…AIAS, IIPE…LALV, AGAF…IILG, IASF…VGFA, VQTL…LTVI, LLGI…LIIA, TAGI…VLIA, and SLVA…TSIW.

It belongs to the KdgT transporter family.

It localises to the cell inner membrane. The enzyme catalyses 2-dehydro-3-deoxy-D-gluconate(in) + H(+)(in) = 2-dehydro-3-deoxy-D-gluconate(out) + H(+)(out). Catalyzes the proton-dependent uptake of 2-keto-3-deoxygluconate (KDG) into the cell. This chain is 2-keto-3-deoxygluconate permease, found in Escherichia coli O157:H7.